A 96-amino-acid chain; its full sequence is YcgL domain-containing protein Csal_1462 (96 aa).

In terms of domain architecture, YcgL spans 4–88 (RLCEIFKSPR…ARESYLLDLY (85 aa)).

The protein is YcgL domain-containing protein Csal_1462 of Chromohalobacter salexigens (strain ATCC BAA-138 / DSM 3043 / CIP 106854 / NCIMB 13768 / 1H11).